Consider the following 307-residue polypeptide: Aspartate carbamoyltransferase catalytic subunit (307 aa).

Positions 59 and 60 each coordinate carbamoyl phosphate. Residue Lys87 coordinates L-aspartate. Carbamoyl phosphate contacts are provided by Arg109, His137, and Gln140. L-aspartate contacts are provided by Arg173 and Arg223. Gly266 and Pro267 together coordinate carbamoyl phosphate.

It belongs to the aspartate/ornithine carbamoyltransferase superfamily. ATCase family. As to quaternary structure, heterododecamer (2C3:3R2) of six catalytic PyrB chains organized as two trimers (C3), and six regulatory PyrI chains organized as three dimers (R2).

It catalyses the reaction carbamoyl phosphate + L-aspartate = N-carbamoyl-L-aspartate + phosphate + H(+). It functions in the pathway pyrimidine metabolism; UMP biosynthesis via de novo pathway; (S)-dihydroorotate from bicarbonate: step 2/3. Catalyzes the condensation of carbamoyl phosphate and aspartate to form carbamoyl aspartate and inorganic phosphate, the committed step in the de novo pyrimidine nucleotide biosynthesis pathway. The protein is Aspartate carbamoyltransferase catalytic subunit of Helicobacter pylori (strain ATCC 700392 / 26695) (Campylobacter pylori).